The following is a 546-amino-acid chain: Serine/threonine-protein kinase Chk2 (546 aa).

Residues 1–70 form a disordered region; the sequence is MKSHHQSHSS…SSHSSSGTLS (70 aa). Positions 8–70 are enriched in low complexity; the sequence is HSSTSSKAHD…SSHSSSGTLS (63 aa). Phosphothreonine; by MAP3K20 is present on Thr-68. Ser-71 is subject to Phosphoserine; by PLK3. Thr-77 bears the Phosphothreonine; by ATM and MAP3K20 mark. Position 82 is a phosphoserine; by PLK3 (Ser-82). Residues 117 to 179 form the FHA domain; that stretch reads YWFGRDKSCE…NGTFVNTELI (63 aa). The Protein kinase domain maps to 224 to 490; that stretch reads YIMSKTLGSG…TEEALNHPWL (267 aa). Residues 231–238, Lys-253, and 306–312 each bind ATP; these read GSGACGEV and ELMEGGE. Asp-351 serves as the catalytic Proton acceptor. Residues 355-356 and Asp-372 contribute to the ATP site; that span reads EN. The segment at 372 to 398 is T-loop/activation segment; the sequence is DFGQSKILGETSLMRTLCGTPTYLAPE. The residue at position 383 (Ser-383) is a Phosphoserine; by autocatalysis. Phosphothreonine; by autocatalysis is present on residues Thr-387 and Thr-391. Ser-460 carries the post-translational modification Phosphoserine.

The protein belongs to the protein kinase superfamily. CAMK Ser/Thr protein kinase family. CHK2 subfamily. Homodimer. Homodimerization is part of the activation process but the dimer may dissociate following activation. Interacts with PML. Interacts with TP53. Interacts with RB1; phosphorylates RB1. Interacts with BRCA1. Interacts (phosphorylated at Thr-68) with MDC1; requires ATM-mediated phosphorylation of CHEK2. Interacts with TP53BP1; modulates CHEK2 phosphorylation at Thr-68 in response to ionizing radiation. Interacts with CDC25A; phosphorylates CDC25A and mediates its degradation in response to ionizing radiation. Interacts with CUL1; mediates CHEK2 ubiquitination and regulation. Interacts with CDKN2AIP. Interacts (via protein kinase domain) with CCAR2 (via N-terminus). Interacts with SIRT1. Requires Mg(2+) as cofactor. In terms of processing, phosphorylated. Phosphorylated at Ser-82 by PLK3 in response to DNA damage, promoting phosphorylation at Thr-77 by ATM and the G2/M transition checkpoint. Phosphorylation at Thr-77 induces homodimerization. Autophosphorylates at Thr-387 and Thr-391 in the T-loop/activation segment upon dimerization to become fully active. DNA damage-induced autophosphorylation at Ser-383 induces CUL1-mediated ubiquitination and regulates the pro-apoptotic function. Phosphorylation at Ser-460 also regulates ubiquitination. Phosphorylated by PLK4. Post-translationally, ubiquitinated. CUL1-mediated ubiquitination regulates the pro-apoptotic function. Ubiquitination may also regulate protein stability. Ubiquitinated by RNF8 via 'Lys-48'-linked ubiquitination. In terms of tissue distribution, ubiquitously expressed with higher levels in the thymus, spleen and colon (at protein level).

It is found in the nucleus. Its subcellular location is the PML body. The protein localises to the nucleoplasm. It carries out the reaction L-seryl-[protein] + ATP = O-phospho-L-seryl-[protein] + ADP + H(+). The catalysed reaction is L-threonyl-[protein] + ATP = O-phospho-L-threonyl-[protein] + ADP + H(+). Activated through phosphorylation at Thr-68 by ATM in response to DNA double-strand breaks. Activation is modulated by several mediators including MDC1 and TP53BP1. Induces homodimerization with exchange of the T-loop/activation segment between protomers and transphosphorylation of the protomers. The autophosphorylated kinase dimer is fully active. Negatively regulated by PPM1D through dephosphorylation of Thr-68. In terms of biological role, serine/threonine-protein kinase which is required for checkpoint-mediated cell cycle arrest, activation of DNA repair and apoptosis in response to the presence of DNA double-strand breaks. May also negatively regulate cell cycle progression during unperturbed cell cycles. Following activation, phosphorylates numerous effectors preferentially at the consensus sequence [L-X-R-X-X-S/T]. Regulates cell cycle checkpoint arrest through phosphorylation of CDC25A, CDC25B and CDC25C, inhibiting their activity. Inhibition of CDC25 phosphatase activity leads to increased inhibitory tyrosine phosphorylation of CDK-cyclin complexes and blocks cell cycle progression. May also phosphorylate NEK6 which is involved in G2/M cell cycle arrest. Regulates DNA repair through phosphorylation of BRCA2, enhancing the association of RAD51 with chromatin which promotes DNA repair by homologous recombination. Also stimulates the transcription of genes involved in DNA repair (including BRCA2) through the phosphorylation and activation of the transcription factor FOXM1. Regulates apoptosis through the phosphorylation of p53/TP53, MDM4 and PML. Phosphorylation of p53/TP53 at 'Ser-20' by CHEK2 may alleviate inhibition by MDM2, leading to accumulation of active p53/TP53. Phosphorylation of MDM4 may also reduce degradation of p53/TP53. Also controls the transcription of pro-apoptotic genes through phosphorylation of the transcription factor E2F1. Tumor suppressor, it may also have a DNA damage-independent function in mitotic spindle assembly by phosphorylating BRCA1. Its absence may be a cause of the chromosomal instability observed in some cancer cells. Promotes the CCAR2-SIRT1 association and is required for CCAR2-mediated SIRT1 inhibition. Under oxidative stress, promotes ATG7 ubiquitination by phosphorylating the E3 ubiquitin ligase TRIM32 at 'Ser-56' leading to positive regulation of the autophagosme assembly. The chain is Serine/threonine-protein kinase Chk2 from Mus musculus (Mouse).